Reading from the N-terminus, the 179-residue chain is Guanosine-3',5'-bis(diphosphate) 3'-pyrophosphohydrolase MESH1 (179 aa).

An HD domain is found at 32 to 127 (YINHPLGVAR…VKLADKLYNL (96 aa)). Mn(2+) is bound by residues His35, His61, and Asp62. Residues Glu65 and Asp66 each act as nucleophile in the active site. Asp122 is a binding site for Mn(2+).

This sequence belongs to the MESH1 family. It depends on Mn(2+) as a cofactor.

It catalyses the reaction guanosine 3',5'-bis(diphosphate) + H2O = GDP + diphosphate + H(+). In terms of biological role, ppGpp hydrolyzing enzyme involved in starvation response. This Xenopus tropicalis (Western clawed frog) protein is Guanosine-3',5'-bis(diphosphate) 3'-pyrophosphohydrolase MESH1 (hddc3).